The following is a 154-amino-acid chain: Probable chemoreceptor glutamine deamidase CheD (154 aa).

This sequence belongs to the CheD family.

The enzyme catalyses L-glutaminyl-[protein] + H2O = L-glutamyl-[protein] + NH4(+). In terms of biological role, probably deamidates glutamine residues to glutamate on methyl-accepting chemotaxis receptors (MCPs), playing an important role in chemotaxis. The polypeptide is Probable chemoreceptor glutamine deamidase CheD (Methanococcus maripaludis (strain C5 / ATCC BAA-1333)).